The chain runs to 37 residues: Large ribosomal subunit protein bL36c (37 aa).

Belongs to the bacterial ribosomal protein bL36 family.

The protein resides in the plastid. It localises to the chloroplast. The sequence is that of Large ribosomal subunit protein bL36c from Cucumis sativus (Cucumber).